The sequence spans 464 residues: PH domain-containing rcdII (464 aa).

Positions 8 to 210 form a coiled coil; sequence KSSKEIIEDL…NTKLMSNLEI (203 aa). Disordered stretches follow at residues 215–290 and 317–347; these read NFNN…NSSG and CNNNNNNNNGNSKLSTGVPITRSRSSSSNSN. 3 stretches are compositionally biased toward low complexity: residues 234 to 288, 317 to 328, and 338 to 347; these read STTT…SSNS, CNNNNNNNNGNS, and RSRSSSSNSN. The PH domain maps to 353 to 461; it reads KIVKEGWLKR…WKDTISSLMP (109 aa).

The sequence is that of PH domain-containing rcdII (rcdII) from Dictyostelium discoideum (Social amoeba).